We begin with the raw amino-acid sequence, 221 residues long: Epididymal secretory glutathione peroxidase (221 aa).

Positions M1–T21 are cleaved as a signal peptide. Residue C73 is part of the active site.

The protein belongs to the glutathione peroxidase family. Epididymis.

It localises to the secreted. It catalyses the reaction 2 glutathione + H2O2 = glutathione disulfide + 2 H2O. In terms of biological role, protects cells and enzymes from oxidative damage, by catalyzing the reduction of hydrogen peroxide, lipid peroxides and organic hydroperoxide, by glutathione. May constitute a glutathione peroxidase-like protective system against peroxide damage in sperm membrane lipids. In Macaca fascicularis (Crab-eating macaque), this protein is Epididymal secretory glutathione peroxidase (GPX5).